A 151-amino-acid polypeptide reads, in one-letter code: S-ribosylhomocysteine lyase (151 aa).

Fe cation contacts are provided by His54, His58, and Cys121.

Belongs to the LuxS family. Homodimer. Fe cation serves as cofactor.

It carries out the reaction S-(5-deoxy-D-ribos-5-yl)-L-homocysteine = (S)-4,5-dihydroxypentane-2,3-dione + L-homocysteine. In terms of biological role, involved in the synthesis of autoinducer 2 (AI-2) which is secreted by bacteria and is used to communicate both the cell density and the metabolic potential of the environment. The regulation of gene expression in response to changes in cell density is called quorum sensing. Catalyzes the transformation of S-ribosylhomocysteine (RHC) to homocysteine (HC) and 4,5-dihydroxy-2,3-pentadione (DPD). The protein is S-ribosylhomocysteine lyase of Clostridioides difficile (strain 630) (Peptoclostridium difficile).